Consider the following 905-residue polypeptide: Alanine--tRNA ligase (905 aa).

Zn(2+) contacts are provided by His569, His573, Cys693, and His697.

It belongs to the class-II aminoacyl-tRNA synthetase family. Zn(2+) is required as a cofactor.

It is found in the cytoplasm. It catalyses the reaction tRNA(Ala) + L-alanine + ATP = L-alanyl-tRNA(Ala) + AMP + diphosphate. In terms of biological role, catalyzes the attachment of alanine to tRNA(Ala) in a two-step reaction: alanine is first activated by ATP to form Ala-AMP and then transferred to the acceptor end of tRNA(Ala). Also edits incorrectly charged Ser-tRNA(Ala) and Gly-tRNA(Ala) via its editing domain. The sequence is that of Alanine--tRNA ligase from Roseiflexus castenholzii (strain DSM 13941 / HLO8).